Consider the following 1316-residue polypeptide: MLDVNFFDELRIGLATADDIRNWSFGEVKKPETINYRTLKPEKDGLFCEKIFGPTRDWECYCGKYKRVRFKGIICERCGVEVTRAKVRRERMGHIELAAPVTHIWYFKGVPSRLGYLLDLAPKDLEKIIYFAAYVITAVDDEMRHNELSTLEAEMVVEKKAIEDQRDADLEARAQKLEADMKELEEEGAKSDVRRKVRDGGEREMRQLRDRAQRELDRLDEIWTTFTKLAPKQLIVDELLYRELQDRYGEYFEGAMGAESIKKLIETFDIDAEADSLRDTIKNGKGQKKLRALKRLKVVAAFQTNRNSPMGMVLDAVPVIPPELRPMVQLDGGRFATSDLNDLYRRVINRNNRLKRLIDLGAPEIIVNNEKRMLQESVDALFDNGRRGRPVTGPGNRPLKSLSDLLKGKQGRFRQNLLGKRVDYSGRSVIVVGPQLKLHQCGLPKLMALELFKPFVMKRLVDLNHAQNIKSAKRMVERQRPQVWDVLEEVISEHPVLLNRAPTLHRLGIQAFEPQLVEGKAIQLHPLVCEAFNADFDGDQMAVHLPLSAEAQAEARILMLSSNNILSPASGRPLAMPRLDMVTGLYFLTTEIEGDKGEFTPAAKDQPESGVYSSPAEAIMAMDRGALSVRAKIRVRLTQLRPPAEIEAERFPDGWNMGDAWTAETTLGRVLFNELLPRGYPFVNKQMHKKVQAAIINDLAERYPMIVVAQTVDKLKDAGFYWATRSGVTVSMADVLVPPEKQEILERYEAAADSIEKQYQRGKLDKGERNEALVKIWQDATEEVGQALRSHYPKDNPIITIVDSGATGNFTQTRTLAGMKGLVTNPKGEFIPRPIKSSFREGLTVLEYFINTHGARKGLADTALRTADSGYLTRRLVDVSQDVIVRETDCETERGITVTLAELQGDQLLRDQHIETSAYARTLATDAVDANGNVVVERGHDLGDPAIDALLAAGITEVKVRSVLTCATGTGVCAMCYGRSMATGKLVDIGEAVGIVAAQSIGEPGTQLTMRTFHQGGVTGGADIVGGLPRVQELFEARIPRNRAPIADVSGRIRLEESDKFYKITIVPDDGGEEVVYDKLSRRQRLKVFKHDDGSERLLTDGDHVEVGQQLLEGSADPHEVLRVQGPREVQIHLVKEVQEVYRAQGVSIHDKHIEVIVRQMLRRVTIIDSGATEFLPGSLTERGEFETENRRVVAEGGEPAAGRPVLMGITKASLATDSWLSAASFQETTRVLTDAAINCRSDKLQGLKENVIIGKLIPAGTGINRYRNIQVQPTEEARAAAYTIPSYEDQYYSPDFGQATGAAVPLDDYGYSDYR.

Zn(2+) contacts are provided by cysteine 60, cysteine 62, cysteine 75, and cysteine 78. Residues glutamate 183–arginine 209 are disordered. Residues aspartate 535, aspartate 537, and aspartate 539 each coordinate Mg(2+). Cysteine 890, cysteine 966, cysteine 973, and cysteine 976 together coordinate Zn(2+).

The protein belongs to the RNA polymerase beta' chain family. The RNAP catalytic core consists of 2 alpha, 1 beta, 1 beta' and 1 omega subunit. When a sigma factor is associated with the core the holoenzyme is formed, which can initiate transcription. It depends on Mg(2+) as a cofactor. The cofactor is Zn(2+).

The catalysed reaction is RNA(n) + a ribonucleoside 5'-triphosphate = RNA(n+1) + diphosphate. Functionally, DNA-dependent RNA polymerase catalyzes the transcription of DNA into RNA using the four ribonucleoside triphosphates as substrates. The protein is DNA-directed RNA polymerase subunit beta' of Mycolicibacterium gilvum (strain PYR-GCK) (Mycobacterium gilvum (strain PYR-GCK)).